A 494-amino-acid polypeptide reads, in one-letter code: UDP-glucose 6-dehydrogenase (494 aa).

Residues 11–16 (GAGYVG), D36, R41, and 89–93 (VNTPT) each bind NAD(+). Residues 88-110 (SVNTPTKTYGMGKGRAADLKYIE) are disordered. An N6-acetyllysine modification is found at K107. The segment at 129-135 (KSTVPVR) is allosteric switch region. 130–132 (STV) lines the NAD(+) pocket. E161 acts as the Proton donor/acceptor in catalysis. Residues 161–165 (EFLAE), 220–224 (KLAAN), R260, and 267–273 (KASVGFG) each bind substrate. Position 165 (E165) interacts with NAD(+). The active-site Proton donor/acceptor is the K220. The active-site Nucleophile is the C276. NAD(+) is bound at residue 276-279 (CFQK). The tract at residues 321 to 325 (SLFNT) is important for formation of active hexamer structure. 338-339 (FK) contacts substrate. Residue R346 coordinates NAD(+). Substrate is bound at residue R442. The disordered stretch occupies residues 466 to 494 (VSSKRIPYAPSGEIPKFSLQDPPNKKPKV). Phosphoserine is present on S476.

This sequence belongs to the UDP-glucose/GDP-mannose dehydrogenase family. As to quaternary structure, homohexamer.

The catalysed reaction is UDP-alpha-D-glucose + 2 NAD(+) + H2O = UDP-alpha-D-glucuronate + 2 NADH + 3 H(+). The protein operates within nucleotide-sugar biosynthesis; UDP-alpha-D-glucuronate biosynthesis; UDP-alpha-D-glucuronate from UDP-alpha-D-glucose: step 1/1. Its activity is regulated as follows. UDP-alpha-D-xylose (UDX) acts as a feedback inhibitor. It binds at the same site as the substrate, but functions as allosteric inhibitor by triggering a conformation change that disrupts the active hexameric ring structure and gives rise to an inactive, horseshoe-shaped hexamer. Its function is as follows. Catalyzes the formation of UDP-alpha-D-glucuronate, a constituent of complex glycosaminoglycans. Required for the biosynthesis of chondroitin sulfate and heparan sulfate. Required for embryonic development via its role in the biosynthesis of glycosaminoglycans. Required for proper brain and neuronal development. The protein is UDP-glucose 6-dehydrogenase (UGDH) of Pongo abelii (Sumatran orangutan).